Reading from the N-terminus, the 454-residue chain is Allantoinase (454 aa).

H59, H61, K150, H190, H246, and D319 together coordinate Zn(2+). Position 150 is an N6-carboxylysine (K150).

The protein belongs to the metallo-dependent hydrolases superfamily. Allantoinase family. Homotetramer. Zn(2+) serves as cofactor. Carboxylation allows a single lysine to coordinate two zinc ions.

It catalyses the reaction (S)-allantoin + H2O = allantoate + H(+). It participates in nitrogen metabolism; (S)-allantoin degradation; allantoate from (S)-allantoin: step 1/1. Catalyzes the conversion of allantoin (5-ureidohydantoin) to allantoic acid by hydrolytic cleavage of the five-member hydantoin ring. This is Allantoinase from Bacillus licheniformis (strain ATCC 14580 / DSM 13 / JCM 2505 / CCUG 7422 / NBRC 12200 / NCIMB 9375 / NCTC 10341 / NRRL NRS-1264 / Gibson 46).